Here is a 262-residue protein sequence, read N- to C-terminus: Thiazole synthase (262 aa).

Lys97 acts as the Schiff-base intermediate with DXP in catalysis. Residues Gly158, 185–186 (AG), and 207–208 (NT) each bind 1-deoxy-D-xylulose 5-phosphate.

Belongs to the ThiG family. As to quaternary structure, homotetramer. Forms heterodimers with either ThiH or ThiS.

It is found in the cytoplasm. It carries out the reaction [ThiS sulfur-carrier protein]-C-terminal-Gly-aminoethanethioate + 2-iminoacetate + 1-deoxy-D-xylulose 5-phosphate = [ThiS sulfur-carrier protein]-C-terminal Gly-Gly + 2-[(2R,5Z)-2-carboxy-4-methylthiazol-5(2H)-ylidene]ethyl phosphate + 2 H2O + H(+). Its pathway is cofactor biosynthesis; thiamine diphosphate biosynthesis. Functionally, catalyzes the rearrangement of 1-deoxy-D-xylulose 5-phosphate (DXP) to produce the thiazole phosphate moiety of thiamine. Sulfur is provided by the thiocarboxylate moiety of the carrier protein ThiS. In vitro, sulfur can be provided by H(2)S. This Neisseria gonorrhoeae (strain ATCC 700825 / FA 1090) protein is Thiazole synthase.